Here is a 508-residue protein sequence, read N- to C-terminus: MAGQRTCQRRSSRAGPGKMQEPPKSIEEFLKFQNWDYWPREIHFRDDDKWSCTLKKIKEDSSFVSIYTHLWENVPRIFEALLIMESKLKEYSLILQNHTSEIFKWKSMISETSSYRKLERYGEFLKKYHKKKKIMLSDEMETEKNIEGCSFTGFKANELTQLPRHLDAEQIYLFILKAHNFDERVFKIWKTHFLSEASIALLHDSFWWWFLHKFRPDRENQDCLFDRISESYVTLFMSIPLSRKDAFFQIYPDCLAQAIYATFHEAFPESSYLFNDEFKEDLGNNIFLWCSGLKPQKGFWIHWKLKELSTTTIHGSKKAPAKSVKERIADSQEHISTSIDFNIIKILNNPRAYTLPISKEESRLSRLATKSHYSSTGPEFNRVLFNFGGQSPLILYYLKMHELAGISKAPKKTKIKLTKIFQEPLPAPTYRDVIKEAKRQFARNQKDFRILQAKATKKPHEVKQDFEKFLHKLRSEAEIERECVASLSSSSSSSPSSTDNYNFEEEEY.

Disordered regions lie at residues 1-22 and 485-508; these read MAGQ…MQEP and ASLS…EEEY. The span at 486 to 497 shows a compositional bias: low complexity; the sequence is SLSSSSSSSPSS.

Belongs to the FAM227 family.

The protein is Protein FAM227B (FAM227B) of Homo sapiens (Human).